A 128-amino-acid polypeptide reads, in one-letter code: Small ribosomal subunit protein uS9 (128 aa).

In terms of assembly, part of the 30S ribosomal subunit. Contacts proteins S7 and S10.

In terms of biological role, part of the top of the head of the 30S subunit. The C-terminal region penetrates the head emerging in the P-site where it contacts tRNA. This Thermus thermophilus (strain ATCC 27634 / DSM 579 / HB8) protein is Small ribosomal subunit protein uS9 (rpsI).